Reading from the N-terminus, the 544-residue chain is 4-coumarate:CoA ligase 1 (544 aa).

Belongs to the ATP-dependent AMP-binding enzyme family. In terms of assembly, monomer. In terms of tissue distribution, mostly expressed in flower organs, with highest levels in corollas, and, to a lesser extent, in tubes, sepals, pistils, stamen and ovaries. Also present at low levels in leaves.

The protein localises to the cytoplasm. It localises to the cytosol. It carries out the reaction (E)-4-coumarate + ATP + CoA = (E)-4-coumaroyl-CoA + AMP + diphosphate. The enzyme catalyses (E)-caffeate + ATP + CoA = (E)-caffeoyl-CoA + AMP + diphosphate. The catalysed reaction is benzoate + ATP + CoA = benzoyl-CoA + AMP + diphosphate. It catalyses the reaction (E)-cinnamate + ATP + CoA = (E)-cinnamoyl-CoA + AMP + diphosphate. It carries out the reaction (E)-ferulate + ATP + CoA = (E)-feruloyl-CoA + AMP + diphosphate. It participates in phenylpropanoid metabolism; trans-cinnamate biosynthesis. It functions in the pathway phytoalexin biosynthesis; 3,4',5-trihydroxystilbene biosynthesis; 3,4',5-trihydroxystilbene from trans-4-coumarate: step 1/2. Its function is as follows. Catalyzes the formation of CoA esters of trans-cinnamic acid, 4-coumaric acid, ferulic acid, benzoic acid and caffeic acid. The polypeptide is 4-coumarate:CoA ligase 1 (Petunia hybrida (Petunia)).